Here is a 173-residue protein sequence, read N- to C-terminus: Large ribosomal subunit protein bL17 (173 aa).

The interval 136–173 is disordered; it reads AEEEAPAVEAEATEATEAPVEEAAAVEAEAPADAEKAE. Positions 138–149 are enriched in acidic residues; it reads EEAPAVEAEATE. A compositionally biased stretch (low complexity) spans 150-166; sequence ATEAPVEEAAAVEAEAP.

This sequence belongs to the bacterial ribosomal protein bL17 family. As to quaternary structure, part of the 50S ribosomal subunit. Contacts protein L32.

The chain is Large ribosomal subunit protein bL17 from Bifidobacterium longum subsp. infantis (strain ATCC 15697 / DSM 20088 / JCM 1222 / NCTC 11817 / S12).